The sequence spans 466 residues: FERM domain-containing protein 8 (466 aa).

Position 1 is an N-acetylmethionine (M1). The segment at 1 to 21 (MEGAEGNAGQPGPAERSHRSS) is disordered. A Phosphoserine modification is found at S24. The region spanning 30-377 (ADVLVYLADD…YCIELSQAAE (348 aa)) is the FERM domain. A disordered region spans residues 379 to 409 (TLSQESASGPHEAPSPSPPPTQRPKLRRQGS). S384 is modified (phosphoserine). The span at 391 to 400 (APSPSPPPTQ) shows a compositional bias: pro residues. S409 carries the post-translational modification Phosphoserine. A Phosphothreonine modification is found at T420. 2 positions are modified to phosphoserine: S440 and S447. A compositionally biased stretch (polar residues) spans 442–460 (FSRQLSSSQGSYTVVQPTD). The interval 442 to 466 (FSRQLSSSQGSYTVVQPTDDSLEQS) is disordered.

Interacts with iRhom proteins, including iRhom2/RHBDF2 (via cytoplasmic N-termini); this interaction leads to mutual protein stabilization. Interacts with LRP6; this interaction affects LRP6-binding to AXIN1. As to expression, widely expressed (at protein level).

The protein resides in the cytoplasm. Its subcellular location is the cytosol. It is found in the cell membrane. Promotes the cell surface stability of iRhom1/RHBDF1 and iRhom2/RHBDF2 and prevents their degradation via the endolysosomal pathway. By acting on iRhoms, involved in ADAM17-mediated shedding of TNF, amphiregulin/AREG, HBEGF and TGFA from the cell surface. Negatively regulates Wnt signaling, possibly by antagonizing the recruitment of AXIN1 to LRP6. The chain is FERM domain-containing protein 8 (Frmd8) from Mus musculus (Mouse).